The chain runs to 104 residues: Complex III assembly factor LYRM7 (104 aa).

Residue Ser-60 is modified to Phosphoserine.

The protein belongs to the complex I LYR family. Interacts with UQCRFS1.

Its subcellular location is the mitochondrion matrix. In terms of biological role, assembly factor required for Rieske Fe-S protein UQCRFS1 incorporation into the cytochrome b-c1 (CIII) complex. Functions as a chaperone, binding to this subunit within the mitochondrial matrix and stabilizing it prior to its translocation and insertion into the late CIII dimeric intermediate within the mitochondrial inner membrane. The sequence is that of Complex III assembly factor LYRM7 (LYRM7) from Pongo abelii (Sumatran orangutan).